Reading from the N-terminus, the 502-residue chain is MAGGTPGGEPTVGSGEPRLKSLATPETIKTGCIAWVEKEGQPRRAEILSIKTTKSGKQFYCNFDNFNKRLDEWVPVIRLDFTREVEWPNPEKEKPKDPKAKKAPTVQSKKTQPSKKSQKRPSKREQSTTSEANTPHPWTDFVENQNRQKSASIGPDGDSQARASVDGGETPGGGDEMEVDERETEVKREPAEFSREVEIEKLRTSGSMTQNPTEVSRIRNISKVQFGRFDLYPWYFSPYPEIFSQEDVIFICEFCLSYYGDLKAFTRHRKKCTLQHPPGNELYRNEEISFFEIDGRRQRTWCRNLCLLSKMFLDHKTLYYDVDPFLFYVMTVRTEKGCHMVGYFSKEKESADGYNVACILTMPQYQRKGYGRLLIQFSYELSRIEGKLGSPEKPLSDLGLLSYRQYWSENILEFLMGYNERDEKVTIEAISTALAMTTQDVEHTLQALRMQVYHKSDHKIVIPEKLIEQREKTKLKRKRTVDPTKIQWKPPVFTASSRTWGW.

Residues 1 to 24 (MAGGTPGGEPTVGSGEPRLKSLAT) are disordered. One can recognise a Tudor-knot domain in the interval 28–80 (IKTGCIAWVEKEGQPRRAEILSIKTTKSGKQFYCNFDNFNKRLDEWVPVIRLD). A compositionally biased stretch (basic and acidic residues) spans 88–100 (PNPEKEKPKDPKA). The interval 88 to 194 (PNPEKEKPKD…EVKREPAEFS (107 aa)) is disordered. Over residues 112-122 (QPSKKSQKRPS) the composition is skewed to basic residues. Polar residues predominate over residues 142-151 (VENQNRQKSA). Residues 184–194 (TEVKREPAEFS) show a composition bias toward basic and acidic residues. The 275-residue stretch at 216 to 490 (SRIRNISKVQ…VDPTKIQWKP (275 aa)) folds into the MYST-type HAT domain. The segment at 249–274 (IFICEFCLSYYGDLKAFTRHRKKCTL) adopts a C2HC MYST-type zinc-finger fold. Positions 299-320 (RTWCRNLCLLSKMFLDHKTLYY) match the ESA1-RPD3 motif motif. At lysine 316 the chain carries N6-acetyllysine; by autocatalysis. Acetyl-CoA is bound by residues 357–361 (ACILT) and 366–372 (QRKGYGR). Glutamate 392 acts as the Proton donor/acceptor in catalysis. Position 396 (serine 396) interacts with acetyl-CoA.

It belongs to the MYST (SAS/MOZ) family. In terms of assembly, component of the NuA4 histone acetyltransferase complex. Post-translationally, autoacetylation at Lys-316 is required for proper function.

It is found in the nucleus. It localises to the chromosome. It catalyses the reaction L-lysyl-[histone] + acetyl-CoA = N(6)-acetyl-L-lysyl-[histone] + CoA + H(+). The catalysed reaction is L-lysyl-[protein] + acetyl-CoA = N(6)-acetyl-L-lysyl-[protein] + CoA + H(+). The enzyme catalyses 2-hydroxyisobutanoyl-CoA + L-lysyl-[protein] = N(6)-(2-hydroxyisobutanoyl)-L-lysyl-[protein] + CoA + H(+). It carries out the reaction (2E)-butenoyl-CoA + L-lysyl-[protein] = N(6)-(2E)-butenoyl-L-lysyl-[protein] + CoA + H(+). Functionally, catalytic component of the NuA4 histone acetyltransferase (HAT) complex which is involved in epigenetic transcriptional activation of selected genes principally by acetylation of nucleosomal histones H4, H3, H2B, H2A and H2A variant H2A.Z. Acetylates histone H4 to form H4K5ac, H4K8ac, H4K12ac and H4K16ac, histone H3 to form H3K14ac, and histone H2A to form H2AK4ac and H2AK7ac. The NuA4 complex is involved in the DNA damage response and is required for chromosome segregation. The NuA4 complex plays a direct role in repair of DNA double-strand breaks (DSBs) through homologous recombination. Recruitment to promoters depends on H3K4me. Also acetylates non-histone proteins. In addition to protein acetyltransferase, can use different acyl-CoA substrates, such as 2-hydroxyisobutanoyl-CoA (2-hydroxyisobutyryl-CoA) or (2E)-butenoyl-CoA (crotonyl-CoA), and is able to mediate protein 2-hydroxyisobutyrylation and crotonylation, respectively. This chain is Histone acetyltransferase ESA1 (ESA1), found in Gibberella zeae (strain ATCC MYA-4620 / CBS 123657 / FGSC 9075 / NRRL 31084 / PH-1) (Wheat head blight fungus).